Here is a 183-residue protein sequence, read N- to C-terminus: Peptidyl-tRNA hydrolase (183 aa).

Position 15 (Tyr-15) interacts with tRNA. The Proton acceptor role is filled by His-20. Positions 67 and 69 each coordinate tRNA.

It belongs to the PTH family. As to quaternary structure, monomer.

The protein resides in the cytoplasm. The enzyme catalyses an N-acyl-L-alpha-aminoacyl-tRNA + H2O = an N-acyl-L-amino acid + a tRNA + H(+). Its function is as follows. Hydrolyzes ribosome-free peptidyl-tRNAs (with 1 or more amino acids incorporated), which drop off the ribosome during protein synthesis, or as a result of ribosome stalling. Functionally, catalyzes the release of premature peptidyl moieties from peptidyl-tRNA molecules trapped in stalled 50S ribosomal subunits, and thus maintains levels of free tRNAs and 50S ribosomes. This Chlamydia abortus (strain DSM 27085 / S26/3) (Chlamydophila abortus) protein is Peptidyl-tRNA hydrolase.